The chain runs to 463 residues: Cysteine--tRNA ligase (463 aa).

Zn(2+) is bound at residue Cys-29. Positions 31 to 41 (ATPQTQPHIGH) match the 'HIGH' region motif. Cys-212, His-237, and Glu-241 together coordinate Zn(2+). Positions 268–272 (KMSKS) match the 'KMSKS' region motif. Lys-271 is an ATP binding site.

It belongs to the class-I aminoacyl-tRNA synthetase family. As to quaternary structure, monomer. It depends on Zn(2+) as a cofactor.

Its subcellular location is the cytoplasm. It catalyses the reaction tRNA(Cys) + L-cysteine + ATP = L-cysteinyl-tRNA(Cys) + AMP + diphosphate. This is Cysteine--tRNA ligase from Corynebacterium diphtheriae (strain ATCC 700971 / NCTC 13129 / Biotype gravis).